Consider the following 177-residue polypeptide: FCS-Like Zinc finger 1 (177 aa).

Residues 22–46 are compositionally biased toward low complexity; sequence SLSEMEAGFSGNNNNSNNHGNPQNG. Disordered regions lie at residues 22–49 and 134–177; these read SLSE…GVVS and ERDE…VAAA. The FLZ-type zinc-finger motif lies at 96-140; it reads HFLDSCFLCKKPLGDNRDIYMYRGDTPFCSEECRQEQIERDEAKE. Basic and acidic residues-rich tracts occupy residues 134–143 and 154–168; these read ERDEAKEKKQ and RRKE…RDYA.

This sequence belongs to the FLZ family. As to quaternary structure, interacts with KIN10 and KIN11 via its FLZ-type zinc finger domain. Interacts with KINB1, KINB2 and KINB3 via its N-terminal part. Interacts with DSP3 and BBX21 via its FLZ-type zinc finger domain. Forms heterodimer with FLZ7 and FLZ15 in vitro.

It is found in the nucleus. Its subcellular location is the cytoplasm. May act as an adapter to facilitate the interaction of SnRK1 complex with effector proteins, conferring tissue- and stimulus-type specific differences in the SnRK1 regulation pathway. This chain is FCS-Like Zinc finger 1, found in Arabidopsis thaliana (Mouse-ear cress).